A 328-amino-acid chain; its full sequence is DNA-directed RNA polymerase subunit alpha (328 aa).

The alpha N-terminal domain (alpha-NTD) stretch occupies residues 1 to 231; it reads MIYQMQMPAK…EHVAFFADFS (231 aa). The alpha C-terminal domain (alpha-CTD) stretch occupies residues 252-328; it reads MRKLLNTKIE…MDITKYQMKG (77 aa).

Belongs to the RNA polymerase alpha chain family. Homodimer. The RNAP catalytic core consists of 2 alpha, 1 beta, 1 beta' and 1 omega subunit. When a sigma factor is associated with the core the holoenzyme is formed, which can initiate transcription.

The enzyme catalyses RNA(n) + a ribonucleoside 5'-triphosphate = RNA(n+1) + diphosphate. Functionally, DNA-dependent RNA polymerase catalyzes the transcription of DNA into RNA using the four ribonucleoside triphosphates as substrates. The protein is DNA-directed RNA polymerase subunit alpha of Chlorobium phaeovibrioides (strain DSM 265 / 1930) (Prosthecochloris vibrioformis (strain DSM 265)).